Consider the following 328-residue polypeptide: Malate dehydrogenase (328 aa).

G12 to A18 is an NAD(+) binding site. Residues R93 and R99 each coordinate substrate. Residues N106, Q113, and V130 to N132 contribute to the NAD(+) site. The substrate site is built by N132 and R163. Residue H188 is the Proton acceptor of the active site.

This sequence belongs to the LDH/MDH superfamily. MDH type 2 family.

It carries out the reaction (S)-malate + NAD(+) = oxaloacetate + NADH + H(+). In terms of biological role, catalyzes the reversible oxidation of malate to oxaloacetate. The polypeptide is Malate dehydrogenase (Burkholderia cenocepacia (strain HI2424)).